A 679-amino-acid chain; its full sequence is DNA ligase (679 aa).

Residues aspartate 32 to aspartate 36, serine 81 to leucine 82, and glutamate 115 contribute to the NAD(+) site. Lysine 117 serves as the catalytic N6-AMP-lysine intermediate. NAD(+) contacts are provided by arginine 138, glutamate 175, lysine 293, and lysine 317. Residues cysteine 411, cysteine 414, cysteine 429, and cysteine 434 each contribute to the Zn(2+) site. Positions asparagine 601–threonine 679 constitute a BRCT domain.

It belongs to the NAD-dependent DNA ligase family. LigA subfamily. Requires Mg(2+) as cofactor. The cofactor is Mn(2+).

The enzyme catalyses NAD(+) + (deoxyribonucleotide)n-3'-hydroxyl + 5'-phospho-(deoxyribonucleotide)m = (deoxyribonucleotide)n+m + AMP + beta-nicotinamide D-nucleotide.. Functionally, DNA ligase that catalyzes the formation of phosphodiester linkages between 5'-phosphoryl and 3'-hydroxyl groups in double-stranded DNA using NAD as a coenzyme and as the energy source for the reaction. It is essential for DNA replication and repair of damaged DNA. The polypeptide is DNA ligase (Parasynechococcus marenigrum (strain WH8102)).